The following is a 957-amino-acid chain: ADAMTS-like protein 2 (957 aa).

The first 29 residues, 1 to 29, serve as a signal peptide directing secretion; that stretch reads MDGRRQHPHWAWSLLAVAVVAGGAAPTEA. The TSP type-1 1 domain occupies 47–106; sequence AYWWGEWTKWTACSRSCGGGVTSQERHCLQQRRKSVPGTGNRTCVGTSKRYQLCRVQECP. Intrachain disulfides connect C59–C100, C63–C105, and C74–C90. N-linked (GlcNAc...) asparagine glycans are attached at residues N87, N374, N435, N482, N518, N530, N539, and N550. Residues 532-544 show a composition bias toward polar residues; the sequence is SSEAPFPNTSASP. Positions 532–568 are disordered; the sequence is SSEAPFPNTSASPPNLAGNRTHKARTRPKARKQGVSP. Residues 551 to 563 are compositionally biased toward basic residues; sequence RTHKARTRPKARK. TSP type-1 domains lie at 570 to 624, 628 to 692, 694 to 742, 743 to 801, 803 to 857, and 859 to 914; these read DMYR…EFCA, CQPR…PACG, QWEM…TGPP, CDRQ…KNCP, HWLA…TCFE, and PCFK…QPCP. N-linked (GlcNAc...) asparagine glycosylation occurs at N737. N813 carries N-linked (GlcNAc...) asparagine glycosylation. The 39-residue stretch at 918-956 folds into the PLAC domain; sequence PDDSCQDQPGTNCALAIKVNLCGHWYYSKACCRSCRPPH.

Interacts with LTBP1. Glycosylated. Can be O-fucosylated by POFUT2 on a serine or a threonine residue found within the consensus sequence C1-X(2)-(S/T)-C2-G of the TSP type-1 repeat domains where C1 and C2 are the first and second cysteine residue of the repeat, respectively. Fucosylated repeats can then be further glycosylated by the addition of a beta-1,3-glucose residue by the glucosyltransferase, B3GALTL. Fucosylation mediates the efficient secretion of ADAMTS family members. Can also be C-glycosylated with one or two mannose molecules on tryptophan residues within the consensus sequence W-X-X-W of the TPRs, and N-glycosylated. These other glycosylations can also facilitate secretion.

The protein localises to the secreted. This Mus musculus (Mouse) protein is ADAMTS-like protein 2 (Adamtsl2).